The chain runs to 240 residues: Serine protease SplB (240 aa).

The signal sequence occupies residues 1 to 36 (MNKNVVIKSLATLTILTSVTGIGTTLVEEVQQTAKA). Catalysis depends on charge relay system residues His-75, Asp-113, and Ser-193.

The protein belongs to the peptidase S1B family.

The protein resides in the secreted. Its function is as follows. Serine protease that cleaves specifically after the sequence Trp-Glu-Leu-Gln. The protein is Serine protease SplB (splB) of Staphylococcus aureus (strain Mu3 / ATCC 700698).